A 397-amino-acid polypeptide reads, in one-letter code: Subtilisin-like protease 12 (397 aa).

The N-terminal stretch at 1 to 19 (MSIFKMMLIYFAILWVVNA) is a signal peptide. Positions 20–116 (AQLLDIDPQG…VEPNKEMQVA (97 aa)) are excised as a propeptide. In terms of domain architecture, Inhibitor I9 spans 35 to 115 (YIVVMKDRVS…FVEPNKEMQV (81 aa)). 3 N-linked (GlcNAc...) asparagine glycosylation sites follow: Asn-123, Asn-136, and Asn-150. The region spanning 125–397 (TWGLSRISHK…NKLLYNGSGA (273 aa)) is the Peptidase S8 domain. Residues Asp-157 and His-188 each act as charge relay system in the active site. Residues Asn-249, Asn-305, and Asn-334 are each glycosylated (N-linked (GlcNAc...) asparagine). Ser-343 acts as the Charge relay system in catalysis. Asn-385 and Asn-393 each carry an N-linked (GlcNAc...) asparagine glycan.

It belongs to the peptidase S8 family.

The protein resides in the secreted. Its function is as follows. Secreted subtilisin-like serine protease with keratinolytic activity that contributes to pathogenicity. This Trichophyton verrucosum (strain HKI 0517) protein is Subtilisin-like protease 12 (SUB12).